A 307-amino-acid chain; its full sequence is tRNA pseudouridine synthase B (307 aa).

Aspartate 41 serves as the catalytic Nucleophile.

The protein belongs to the pseudouridine synthase TruB family. Type 1 subfamily.

The catalysed reaction is uridine(55) in tRNA = pseudouridine(55) in tRNA. Its function is as follows. Responsible for synthesis of pseudouridine from uracil-55 in the psi GC loop of transfer RNAs. The polypeptide is tRNA pseudouridine synthase B (Prochlorococcus marinus (strain MIT 9312)).